Reading from the N-terminus, the 257-residue chain is DNA-binding and peroxide stress resistance protein YaaA (257 aa).

A Helix-hairpin-helix motif is present at residues 35–66 (IGIARKLSAPQIGKLMSISDKLADLNATRFHD).

The protein belongs to the UPF0246 family.

It is found in the cytoplasm. Functionally, protects bacteria from neutrophil-related defense upon infection of mammals. Binds DNA. This is DNA-binding and peroxide stress resistance protein YaaA from Klebsiella pneumoniae subsp. pneumoniae (strain HS11286).